The primary structure comprises 223 residues: UPF0502 protein Sbal223_2520 (223 aa).

This sequence belongs to the UPF0502 family.

In Shewanella baltica (strain OS223), this protein is UPF0502 protein Sbal223_2520.